The sequence spans 159 residues: Cyclin-dependent kinase inhibitor 1 (159 aa).

Ser2 carries the post-translational modification N-acetylserine. Residue Ser2 forms a Glycyl serine ester (Ser-Gly) (interchain with G-Cter in ubiquitin) linkage. The C4-type zinc finger occupies 12–40 (HRSKVCRCLFGPVDSEQLRRDCDALMAGC). The interval 17–24 (CRCLFGPV) is required for binding cyclins. A required for binding CDKs region spans residues 53 to 58 (VTETPL). Residue Ser78 is modified to Phosphoserine; by NUAK1. A disordered region spans residues 78-106 (SPGSRSRDDLGGDKRPSTSSALLQGPAPE). Residues 82–93 (RSRDDLGGDKRP) show a composition bias toward basic and acidic residues. Position 112 is a phosphoserine; by GSK3-beta (Ser112). The segment at 118-142 (VSERPEDSPGGPGTSQGRKRRQTSL) is disordered. A Phosphoserine modification is found at Ser125. Residues 135–159 (RKRRQTSLTDFYHSKRRLVFCKRKP) carry the PIP-box K+4 motif motif. Thr140 is modified (phosphothreonine; by PKA, PKB/AKT1, PIM1 and PIM2). Residue Ser141 is modified to Phosphoserine; by NUAK1. An interaction with TRIM39 region spans residues 147–159 (HSKRRLVFCKRKP).

This sequence belongs to the CDI family. As to quaternary structure, interacts with HDAC1; the interaction is prevented by competitive binding of C10orf90/FATS to HDAC1 facilitating acetylation and protein stabilization of CDKN1A/p21. Interacts with MKRN1. Interacts with PSMA3. Interacts with PCNA. Component of the ternary complex, cyclin D-CDK4-CDKN1A. Interacts (via its N-terminal domain) with CDK4; the interaction promotes the assembly of the cyclin D-CDK4 complex, its nuclear translocation and promotes the cyclin D-dependent enzyme activity of CDK4. Binding to CDK2 leads to CDK2/cyclin E inactivation at the G1-S phase DNA damage checkpoint, thereby arresting cells at the G1-S transition during DNA repair. Interacts with PIM1. Interacts with STK11. Interacts with NUAK1. Interacts with DTL and TRIM39. Interacts with PKP3; the interaction sequesters CDKN1A to the cytoplasm thereby repressing its role as an inhibitor of CDK4- and CDK6-driven RB1 phosphorylation. Phosphorylation of Thr-140 or Ser-141 impairs binding to PCNA. Phosphorylation at Ser-112 by GSK3-beta enhances ubiquitination by the DCX(DTL) complex. Phosphorylation of Thr-140 by PIM2 enhances its stability and inhibits cell proliferation. Phosphorylation of Thr-140 by PIM1 results in the relocation of CDKN1A to the cytoplasm and enhanced CDKN1A protein stability. UV radiation-induced phosphorylation at Ser-78 and Ser-141 by NUAK1 leads to its degradation. Post-translationally, ubiquitinated by MKRN1; leading to polyubiquitination and 26S proteasome-dependent degradation. Ubiquitinated by the DCX(DTL) complex, also named CRL4(CDT2) complex, leading to its degradation during S phase or following UV irradiation. Ubiquitination by the DCX(DTL) complex is essential to control replication licensing and is PCNA-dependent: interacts with PCNA via its PIP-box, while the presence of the containing the 'K+4' motif in the PIP box, recruit the DCX(DTL) complex, leading to its degradation. Ubiquitination at Ser-2 leads to degradation by the proteasome pathway. Ubiquitinated by RNF114; leading to proteasomal degradation. In terms of processing, acetylation leads to protein stability. Acetylated in vitro on Lys-136, Lys-149, Lys-156 and Lys-158. Deacetylation by HDAC1 is prevented by competitive binding of C10orf90/FATS to HDAC1. Expressed in keratinocytes (at protein level).

The protein resides in the cytoplasm. It localises to the nucleus. In terms of biological role, may be involved in p53/TP53 mediated inhibition of cellular proliferation in response to DNA damage. Binds to and inhibits cyclin-dependent kinase activity, preventing phosphorylation of critical cyclin-dependent kinase substrates and blocking cell cycle progression. Functions in the nuclear localization and assembly of cyclin D-CDK4 complex and promotes its kinase activity towards RB1. At higher stoichiometric ratios, inhibits the kinase activity of the cyclin D-CDK4 complex. Inhibits DNA synthesis by DNA polymerase delta by competing with POLD3 for PCNA binding. Plays an important role in controlling cell cycle progression and DNA damage-induced G2 arrest. Its function is as follows. Plays an important role in controlling cell cycle progression and DNA damage-induced G2 arrest. Involved in p53/TP53 mediated inhibition of cellular proliferation in response to DNA damage. Also involved in p53-independent DNA damage-induced G2 arrest mediated by CREB3L1 in astrocytes and osteoblasts. Binds to and inhibits cyclin-dependent kinase activity, preventing phosphorylation of critical cyclin-dependent kinase substrates and blocking cell cycle progression. Functions in the nuclear localization and assembly of cyclin D-CDK4 complex and promotes its kinase activity towards RB1. At higher stoichiometric ratios, inhibits the kinase activity of the cyclin D-CDK4 complex. Inhibits DNA synthesis by DNA polymerase delta by competing with POLD3 for PCNA binding. Negatively regulates the CDK4- and CDK6-driven phosphorylation of RB1 in keratinocytes, thereby resulting in the release of E2F1 and subsequent transcription of E2F1-driven G1/S phase promoting genes. This is Cyclin-dependent kinase inhibitor 1 (Cdkn1a) from Mus musculus (Mouse).